Reading from the N-terminus, the 433-residue chain is Pyrimidine-nucleoside phosphorylase (433 aa).

A phosphate-binding site is contributed by 81 to 83; the sequence is KHS. K(+) is bound by residues Gly88 and Thr90. Residues Thr92, 108 to 110, and Thr120 contribute to the phosphate site; that span reads KMS. Substrate-binding residues include Arg168 and Lys187. K(+) is bound by residues Leu243, Ala246, and Glu255.

This sequence belongs to the thymidine/pyrimidine-nucleoside phosphorylase family. Homodimer. The cofactor is K(+).

The enzyme catalyses uridine + phosphate = alpha-D-ribose 1-phosphate + uracil. It catalyses the reaction thymidine + phosphate = 2-deoxy-alpha-D-ribose 1-phosphate + thymine. The catalysed reaction is 2'-deoxyuridine + phosphate = 2-deoxy-alpha-D-ribose 1-phosphate + uracil. Its function is as follows. Catalyzes phosphorolysis of the pyrimidine nucleosides uridine, thymidine and 2'-deoxyuridine with the formation of the corresponding pyrimidine base and ribose-1-phosphate. This Staphylococcus aureus (strain NCTC 8325 / PS 47) protein is Pyrimidine-nucleoside phosphorylase (pdp).